We begin with the raw amino-acid sequence, 672 residues long: Glycine--tRNA ligase beta subunit (672 aa).

This sequence belongs to the class-II aminoacyl-tRNA synthetase family. In terms of assembly, tetramer of two alpha and two beta subunits.

The protein resides in the cytoplasm. The catalysed reaction is tRNA(Gly) + glycine + ATP = glycyl-tRNA(Gly) + AMP + diphosphate. The polypeptide is Glycine--tRNA ligase beta subunit (Thermotoga sp. (strain RQ2)).